The following is an 82-amino-acid chain: Large ribosomal subunit protein bL27 (82 aa).

The tract at residues 1–20 (MAHKKGASSSRNGRDSNPQY) is disordered. The segment covering 7 to 19 (ASSSRNGRDSNPQ) has biased composition (polar residues).

Belongs to the bacterial ribosomal protein bL27 family.

This Bifidobacterium longum (strain NCC 2705) protein is Large ribosomal subunit protein bL27.